The following is a 250-amino-acid chain: MMGGECKVHQLQAAGDGGPGAVAPFVAKTFHMVSDPSTNAVVRWGGAGNTFLVLDPAAFSDFLLPSYFKHRNFASFVRQLNTYGFRKVDPDRWEFAHESFLRGQAQLLPRIVRKKKKGGAAPGCRELCEEGEEVRGTIEAVQRLREEQRGMEEELQAMDQRLRAAESRPGQMMAFLAKLADEPGVVLRAMLAKKEELAAAGNNGSDPCKRRRIGADTGRGGVATGGDAAEMAQSRGTVPFPFSVLGQVFY.

Residues Glu129–Glu182 adopt a coiled-coil conformation. Residues Leu144 to Ala180 are hydrophobic repeat HR-A/B. The segment at Ala199–Gly226 is disordered. The Nuclear localization signal motif lies at Lys209–Arg212.

The protein belongs to the HSF family. Class C subfamily. Homotrimer. In terms of processing, exhibits temperature-dependent phosphorylation.

It localises to the nucleus. Transcriptional regulator that specifically binds DNA of heat shock promoter elements (HSE). The chain is Heat stress transcription factor C-1b (HSFC1B) from Oryza sativa subsp. japonica (Rice).